Here is a 446-residue protein sequence, read N- to C-terminus: Branched-chain amino acid permease BrnQ (446 aa).

12 helical membrane passes run 13 to 33 (ISSM…PAYL), 41 to 61 (LWIS…LAIA), 81 to 101 (KYSY…FAIP), 120 to 140 (MAKS…MLFF), 154 to 174 (FLTP…LLHP), 196 to 216 (VLAG…IIVI), 237 to 257 (TGVL…LVGA), 285 to 305 (GAVI…IGLI), 325 to 345 (WAII…TTII), 347 to 367 (FSLP…LLAL), 381 to 401 (IMTA…LPAG), and 421 to 441 (GLGW…KGVI).

This sequence belongs to the branched chain amino acid transporter family.

Its subcellular location is the cell membrane. With respect to regulation, leucine uptake is inhibited by the proton ionophore carbonyl cyanide m-chlorophenylhydrazone (CCCP). Functionally, branched chain amino acid transport system which is involved in the uptake of leucine, valine and isoleucine. The proton motive force is probably the driving force for transport. The polypeptide is Branched-chain amino acid permease BrnQ (Lactobacillus delbrueckii subsp. lactis).